A 625-amino-acid chain; its full sequence is Interferon-induced GTP-binding protein Mx2 (625 aa).

One can recognise a Dynamin-type G domain in the interval 29–302; the sequence is DLALPAIAVI…LVFHIGRCLP (274 aa). The tract at residues 39-46 is G1 motif; the sequence is GDQSSGKS. 39 to 46 lines the GTP pocket; sequence GDQSSGKS. The segment at 64–66 is G2 motif; it reads VTR. Residues 140 to 143 are G3 motif; the sequence is DLPG. GTP is bound by residues 140-144 and 209-212; these read DLPGI and TKPD. A G4 motif region spans residues 209 to 212; it reads TKPD. A G5 motif region spans residues 241 to 244; the sequence is RCRG. In terms of domain architecture, GED spans 539-625; sequence REELTCHLKS…TEALKYLAKF (87 aa).

It belongs to the TRAFAC class dynamin-like GTPase superfamily. Dynamin/Fzo/YdjA family.

The protein localises to the cytoplasm. The polypeptide is Interferon-induced GTP-binding protein Mx2 (mx2) (Ictalurus punctatus (Channel catfish)).